The primary structure comprises 336 residues: Ribosomal RNA large subunit methyltransferase F (336 aa).

It belongs to the methyltransferase superfamily. METTL16/RlmF family.

The protein localises to the cytoplasm. The catalysed reaction is adenosine(1618) in 23S rRNA + S-adenosyl-L-methionine = N(6)-methyladenosine(1618) in 23S rRNA + S-adenosyl-L-homocysteine + H(+). Its function is as follows. Specifically methylates the adenine in position 1618 of 23S rRNA. The protein is Ribosomal RNA large subunit methyltransferase F of Yersinia pestis (strain Pestoides F).